The chain runs to 203 residues: Recombination protein RecR (203 aa).

A C4-type zinc finger spans residues Cys-57–Cys-72. Residues Asp-80–Pro-175 form the Toprim domain.

It belongs to the RecR family.

In terms of biological role, may play a role in DNA repair. It seems to be involved in an RecBC-independent recombinational process of DNA repair. It may act with RecF and RecO. In Laribacter hongkongensis (strain HLHK9), this protein is Recombination protein RecR.